We begin with the raw amino-acid sequence, 451 residues long: Trigger factor (451 aa).

The 86-residue stretch at 165-250 (DDKLTIDFEG…LRQIQVREAL (86 aa)) folds into the PPIase FKBP-type domain.

Belongs to the FKBP-type PPIase family. Tig subfamily.

The protein localises to the cytoplasm. It carries out the reaction [protein]-peptidylproline (omega=180) = [protein]-peptidylproline (omega=0). Functionally, involved in protein export. Acts as a chaperone by maintaining the newly synthesized protein in an open conformation. Functions as a peptidyl-prolyl cis-trans isomerase. This is Trigger factor (tig) from Helicobacter pylori (strain J99 / ATCC 700824) (Campylobacter pylori J99).